The primary structure comprises 350 residues: Quinone oxidoreductase-like protein 2 (350 aa).

At lysine 36 the chain carries N6-acetyllysine. Position 201 is an N6-succinyllysine (lysine 201). N6-acetyllysine occurs at positions 302 and 328.

It belongs to the zinc-containing alcohol dehydrogenase family. Quinone oxidoreductase subfamily.

This is Quinone oxidoreductase-like protein 2 from Mus musculus (Mouse).